The chain runs to 429 residues: Serine--tRNA ligase (429 aa).

229-231 (TAE) contacts L-serine. 260–262 (RSE) contacts ATP. E283 lines the L-serine pocket. ATP is bound at residue 347–350 (EISS). Position 383 (S383) interacts with L-serine.

It belongs to the class-II aminoacyl-tRNA synthetase family. Type-1 seryl-tRNA synthetase subfamily. Homodimer. The tRNA molecule binds across the dimer.

It localises to the cytoplasm. It carries out the reaction tRNA(Ser) + L-serine + ATP = L-seryl-tRNA(Ser) + AMP + diphosphate + H(+). The catalysed reaction is tRNA(Sec) + L-serine + ATP = L-seryl-tRNA(Sec) + AMP + diphosphate + H(+). It functions in the pathway aminoacyl-tRNA biosynthesis; selenocysteinyl-tRNA(Sec) biosynthesis; L-seryl-tRNA(Sec) from L-serine and tRNA(Sec): step 1/1. Catalyzes the attachment of serine to tRNA(Ser). Is also able to aminoacylate tRNA(Sec) with serine, to form the misacylated tRNA L-seryl-tRNA(Sec), which will be further converted into selenocysteinyl-tRNA(Sec). The protein is Serine--tRNA ligase of Orientia tsutsugamushi (strain Boryong) (Rickettsia tsutsugamushi).